Consider the following 133-residue polypeptide: Large ribosomal subunit protein bL17 (133 aa).

The protein belongs to the bacterial ribosomal protein bL17 family. As to quaternary structure, part of the 50S ribosomal subunit. Contacts protein L32.

The polypeptide is Large ribosomal subunit protein bL17 (Polaromonas naphthalenivorans (strain CJ2)).